We begin with the raw amino-acid sequence, 218 residues long: Small ribosomal subunit protein uS3 (218 aa).

The KH type-2 domain maps to 38–106; sequence IREFISKRLS…RVHINILEIK (69 aa).

Belongs to the universal ribosomal protein uS3 family. As to quaternary structure, part of the 30S ribosomal subunit. Forms a tight complex with proteins S10 and S14.

In terms of biological role, binds the lower part of the 30S subunit head. Binds mRNA in the 70S ribosome, positioning it for translation. In Bacillus pumilus (strain SAFR-032), this protein is Small ribosomal subunit protein uS3.